We begin with the raw amino-acid sequence, 390 residues long: Protein dimmed (390 aa).

Residues 24 to 163 (HNNNNYNTDG…RNMRRLESNE (140 aa)) form a disordered region. Polar residues-rich tracts occupy residues 29–44 (YNTD…SAEG) and 55–64 (RTSQLSNNTY). Asparagine 61 is a glycosylation site (N-linked (GlcNAc...) asparagine). Over residues 69–78 (TDSSSQSDDT) the composition is skewed to low complexity. Gly residues predominate over residues 79-90 (SGGGGSSNGGGS). The span at 122–141 (PSTIAPNSTSSNSSNANGNA) shows a compositional bias: low complexity. N-linked (GlcNAc...) asparagine glycans are attached at residues asparagine 128, asparagine 133, and asparagine 140. A compositionally biased stretch (basic and acidic residues) spans 151 to 163 (AKERNMRRLESNE). The bHLH domain maps to 156 to 208 (MRRLESNERERMRMHSLNDAFQSLREVIPHVEMERRLSKIETLTLAKNYIINL). Residues asparagine 207 and asparagine 237 are each glycosylated (N-linked (GlcNAc...) asparagine). The disordered stretch occupies residues 312–339 (QQQQASHLPHHQQAMHGHGHLGASIQSQ). N-linked (GlcNAc...) asparagine glycosylation is present at asparagine 347.

As to quaternary structure, forms homodimers via the bHLH domain. These dimers bind the core E-box sequence. Detected in the developing nervous system in the bilateral domains in the cephalic region that later on forms part of the ring gland. Concomitantly expressed in the larval central nervous system (CNS), including the dorsal chain neurons as well as several bilateral clusters of neurons: large, midline protocerebral brain cells (MC), lateral protocerebral brain cells (LC), ventral subesophageal neurons (SE) and lateral abdominal neurons, and the transverse nerves. Outside the CNS, detected in at least three classes of endocrine cells: intrinsic cells of the corpora cardiaca, midgut cells, the Inka cells, lateral Bipolar neurons associated with the segmental transverse nerve, and several peptidergic cells of the enteric nervous system. Expressed only in central and peripheral neuroendocrine secretory cells and neurosecretory neurons but not in sensory or motor neurons.

It localises to the cytoplasm. Transcription factor that regulates neurosecretory (NS) cell function and neuroendocrine cell fate. Acts as a master regulator of common NS functions such as Phm expression and neuropeptide production. Plays a role as a regulator of peptide-containing large dense-core vesicle (LDCV) production and peptidergic cell differentiation. Controls transcription of FMRFamide in Tv neuronal cells and Fur1 in Ap-let cells (Tvb and dorsal apterous cells). Also required for up-regulation of Phm in Tv and Ap-let cells, and expression of three neuropeptide genes, Ms, FMRFamide and Lk. Influences both regulated and constitutive secretory activity in neuroendocrine cells at embryonic and postembryonic level. Loss of function studies show reduced cellular levels of various neuropeptides and neuropeptide biosynthetic enzymes. The chain is Protein dimmed (dimm) from Drosophila melanogaster (Fruit fly).